The following is a 402-amino-acid chain: S-adenosylmethionine synthase (402 aa).

His16 contributes to the ATP binding site. Asp18 contributes to the Mg(2+) binding site. Glu44 contacts K(+). Glu57 and Gln103 together coordinate L-methionine. The tract at residues 103–113 (QSPDIAQGVDT) is flexible loop. ATP is bound by residues 178–180 (DGK), 249–250 (KF), Asp258, 264–265 (RK), Ala281, and Lys285. Asp258 contacts L-methionine. Lys289 serves as a coordination point for L-methionine.

The protein belongs to the AdoMet synthase family. In terms of assembly, homotetramer; dimer of dimers. The cofactor is Mg(2+). K(+) is required as a cofactor.

It localises to the cytoplasm. It catalyses the reaction L-methionine + ATP + H2O = S-adenosyl-L-methionine + phosphate + diphosphate. Its pathway is amino-acid biosynthesis; S-adenosyl-L-methionine biosynthesis; S-adenosyl-L-methionine from L-methionine: step 1/1. In terms of biological role, catalyzes the formation of S-adenosylmethionine (AdoMet) from methionine and ATP. The overall synthetic reaction is composed of two sequential steps, AdoMet formation and the subsequent tripolyphosphate hydrolysis which occurs prior to release of AdoMet from the enzyme. This is S-adenosylmethionine synthase from Mycolicibacterium vanbaalenii (strain DSM 7251 / JCM 13017 / BCRC 16820 / KCTC 9966 / NRRL B-24157 / PYR-1) (Mycobacterium vanbaalenii).